Consider the following 205-residue polypeptide: Adenylyl-sulfate kinase (205 aa).

Gly-31–Ser-38 is a binding site for ATP. Ser-105 functions as the Phosphoserine intermediate in the catalytic mechanism.

This sequence belongs to the APS kinase family.

It carries out the reaction adenosine 5'-phosphosulfate + ATP = 3'-phosphoadenylyl sulfate + ADP + H(+). It functions in the pathway sulfur metabolism; hydrogen sulfide biosynthesis; sulfite from sulfate: step 2/3. Functionally, catalyzes the synthesis of activated sulfate. This Shewanella baltica (strain OS155 / ATCC BAA-1091) protein is Adenylyl-sulfate kinase.